Here is a 171-residue protein sequence, read N- to C-terminus: MSVLQVVLYPDDRLTKVCEPVTQVDDELNQFIDDMFDTMYQEGGIGLAASQVGVLKRVITIDIEGDKTNQVVLINPEILESCGETGIEEGCLSIPGYRALVPRKEKITVKALNRQGEEVIYHADDLFAICIQHEIDHLNGIVFVDHISNLKRQRIKDKMQKLKKQLYRSKA.

Residues Cys-91 and His-133 each coordinate Fe cation. Glu-134 is an active-site residue. Residue His-137 coordinates Fe cation.

It belongs to the polypeptide deformylase family. It depends on Fe(2+) as a cofactor.

The enzyme catalyses N-terminal N-formyl-L-methionyl-[peptide] + H2O = N-terminal L-methionyl-[peptide] + formate. Its function is as follows. Removes the formyl group from the N-terminal Met of newly synthesized proteins. Requires at least a dipeptide for an efficient rate of reaction. N-terminal L-methionine is a prerequisite for activity but the enzyme has broad specificity at other positions. The sequence is that of Peptide deformylase from Haemophilus ducreyi (strain 35000HP / ATCC 700724).